The sequence spans 419 residues: D(4) dopamine receptor (419 aa).

Topologically, residues 1-29 (MGNRSTADADGLLAGRGPAAGASAGASAG) are extracellular. A glycan (N-linked (GlcNAc...) asparagine) is linked at asparagine 3. A helical transmembrane segment spans residues 30–50 (LAGQGAAALVGGVLLIGAVLA). The Cytoplasmic segment spans residues 51-71 (GNSLVCVSVATERALQTPTNS). A helical transmembrane segment spans residues 72-92 (FIVSLAAADLLLALLVLPLFV). Aspartate 80 provides a ligand contact to Na(+). Residues 93–110 (YSEVQGGAWLLSPRLCDA) lie on the Extracellular side of the membrane. Cysteine 108 and cysteine 185 are joined by a disulfide. Residues 111 to 131 (LMAMDVMLCTASIFNLCAISV) traverse the membrane as a helical segment. Aspartate 115 contacts (2R,3R)-nemonapride. A Na(+)-binding site is contributed by serine 122. Residues 132-152 (DRFVAVAVPLRYNRQGGSRRQ) are Cytoplasmic-facing. A helical membrane pass occupies residues 153-173 (LLLIGATWLLSAAVAAPVLCG). The Extracellular segment spans residues 174-192 (LNDVRGRDPAVCRLEDRDY). A helical membrane pass occupies residues 193–213 (VVYSSVCSFFLPCPLMLLLYW). Serine 196 is a binding site for (2R,3R)-nemonapride. Over 214-346 (ATFRGLQRWE…ITGRERKAMR (133 aa)) the chain is Cytoplasmic. The segment at 230–264 (LHGRAPRRPSGPGPPSPTPPAPRLPQDPCGPDCAP) is disordered. Positions 238–254 (PSGPGPPSPTPPAPRLP) are enriched in pro residues. A 1; approximate repeat occupies 249–264 (PAPRLPQDPCGPDCAP). The segment at 249–312 (PAPRLPQDPC…PDPCGSNCAP (64 aa)) is 4 X 16 AA approximate tandem repeats of [PA]-A-P-G-L-P-[PQR]-[DG]-P-C-G-P-D-C-A-P. Repeat copies occupy residues 265 to 280 (PAPGLPRGPCGPDCAP) and 281 to 296 (AAPSLPQDPCGPDCAP). The stretch at 297 to 312 (PAPGLPPDPCGSNCAP) is one 4; approximate repeat. The tract at residues 317 to 336 (RAAALPPQTPPQTRRRRRAK) is disordered. Residues 347–367 (VLPVVVGAFLLCWTPFFVVHI) form a helical membrane-spanning segment. At 368–382 (TQALCPACSVPPRLV) the chain is on the extracellular side. A disulfide bridge links cysteine 372 with cysteine 375. A helical membrane pass occupies residues 383–403 (SAVTWLGYVNSALNPVIYTVF). Residues 404–419 (NAEFRNVFRKALRACC) are Cytoplasmic-facing. Cysteine 419 carries the S-palmitoyl cysteine lipid modification.

The protein belongs to the G-protein coupled receptor 1 family. Forms homo- and heterooligomers with DRD2. D4.7 allele exhibits higher affinity for homodimers compared to DRD2 heterodimers, while alleles D42. and 4.4 have similar affinities for both. The interaction with DRD2 may modulate agonist-induced downstream signaling. Interacts with CLIC6. Interacts with GPRASP1. May interact with ADORA2A. Interacts with KLHL12. Polyubiquitinated by the BCR(KLHL12) E3 ubiquitin ligase complex: polyubiquitination does not lead to degradation of DRD4 protein. In terms of processing, palmitoylated. Palmitoylation of the C-terminal Cys is important for normal expression at the cell membrane. As to expression, highly expressed in retina. Detected at much lower levels in brain, in amygdala, thalamus, hypothalamus, cerebellum and pituitary.

Its subcellular location is the cell membrane. Signaling in response to agonists such as dopamine, epinephrine and norepinephrine is modulated by Na(+); lower Na(+) levels result in higher receptor activity (in vitro). Its function is as follows. Dopamine receptor responsible for neuronal signaling in the mesolimbic system of the brain, an area of the brain that regulates emotion and complex behavior. Activated by dopamine, but also by epinephrine and norepinephrine, and by numerous synthetic agonists and drugs. Agonist binding triggers signaling via G proteins that inhibit adenylyl cyclase. Modulates the circadian rhythm of contrast sensitivity by regulating the rhythmic expression of NPAS2 in the retinal ganglion cells. The chain is D(4) dopamine receptor (DRD4) from Homo sapiens (Human).